A 596-amino-acid polypeptide reads, in one-letter code: Transcription factor EGL1 (596 aa).

The bHLH domain maps to 401 to 450 (EETGNHALSEKKRREKLNERFMTLRSIIPSISKIDKVSILDDTIEYLQDL).

Efficient DNA binding requires dimerization with another bHLH protein. Homodimer and heterodimer with GL3. Interacts with CPC, MYB0/GL1, MYB5, MYB23, MYB113, MYB114, MYB75/PAP1, MYB90/PAP2, TT2, TRY, TTG1 and MYB66/WER. As to expression, ubiquitous with higher levels in buds and flowers. Specifically localized in developing root hair cells. Expressed in epidermal root hair cells (trichoblasts) and moves to root hairless cells (atrichoblasts) by a cell-to-cell movement through plasmodesmata (at protein level).

It localises to the nucleus. Functionally, transcription activator, when associated with MYB75/PAP1, MYB90/PAP2 or TT2. Involved in epidermal cell fate specification. Negatively regulates stomata formation but promotes trichome formation. Together with MYB66/WER, promotes the formation of non-hair cells in root epidermis cells in the N position. Whereas together with CPC, promotes the formation of hair cells in root epidermis cells in the H position by inhibiting non-hair cell formation. Also seems to play a role in the activation of anthocyanin biosynthesis, probably together with MYB75/PAP1. Involved in seed mucilage production. Activates the transcription of GL2. The sequence is that of Transcription factor EGL1 (BHLH2) from Arabidopsis thaliana (Mouse-ear cress).